The chain runs to 245 residues: Adenylate kinase (245 aa).

ATP is bound at residue 15-20 (GSGKGT). An NMP region spans residues 35-64 (SSGDLLRGAVSKDTPLSQEIKSYLDQGKLL). AMP is bound by residues Ser36, Arg41, 62 to 64 (KLL), 103 to 106 (GFPR), and Gln110. Residues 143–176 (SRYICPACQGIYNEQQGFSSCPKCSVELIRRSDD) form an LID region. Arg144 is a binding site for ATP. Positions 147 and 150 each coordinate Zn(2+). 153–154 (IY) is an ATP binding site. Residues Cys163 and Cys166 each coordinate Zn(2+). 2 residues coordinate AMP: Arg173 and Arg184. An ATP-binding site is contributed by Ala212.

Belongs to the adenylate kinase family. As to quaternary structure, monomer.

Its subcellular location is the cytoplasm. It carries out the reaction AMP + ATP = 2 ADP. It functions in the pathway purine metabolism; AMP biosynthesis via salvage pathway; AMP from ADP: step 1/1. Catalyzes the reversible transfer of the terminal phosphate group between ATP and AMP. Plays an important role in cellular energy homeostasis and in adenine nucleotide metabolism. This is Adenylate kinase from Chlamydia trachomatis serovar L2 (strain ATCC VR-902B / DSM 19102 / 434/Bu).